Reading from the N-terminus, the 579-residue chain is Extracellular serine/threonine protein kinase FAM20C (579 aa).

Residues 1–10 lie on the Cytoplasmic side of the membrane; the sequence is MKMILVRRFR. A propeptide spanning residues 1–87 is cleaved from the precursor; sequence MKMILVRRFR…PNKHTLRILQ (87 aa). Residues 11 to 31 traverse the membrane as a helical; Signal-anchor for type II membrane protein segment; it reads VLILVVFLLACALHIAVDLLP. Residues 32–579 lie on the Lumenal side of the membrane; that stretch reads KLDRRATRSS…ATEHRASTER (548 aa). Positions 38 to 79 are disordered; sequence TRSSGEPGCSCAQPAAEAAGPGWAQARSRPGESAGGDAGWPN. The segment covering 49–63 has biased composition (low complexity); the sequence is AQPAAEAAGPGWAQA. Asn96 is a glycosylation site (N-linked (GlcNAc...) asparagine). The interval 104-155 is disordered; sequence KLPSAAEPVDHAPRGQEPRSPPPRDPAHRPLLRDPGPRPRVPPPGPSGDGSL. 2 stretches are compositionally biased toward basic and acidic residues: residues 111-120 and 128-140; these read PVDHAPRGQE and DPAH…DPGP. 3 residues coordinate ATP: Gln264, Lys280, and Glu301. Glu301 contacts Mn(2+). The kinase domain stretch occupies residues 349–560; it reads FVSPANNICF…AVRDCVEKDG (212 aa). Intrachain disulfides connect Cys357–Cys373 and Cys362–Cys366. 384-387 serves as a coordination point for ATP; it reads AAFL. 2 disulfide bridges follow: Cys421/Cys495 and Cys496/Cys555. Asp453 is a catalytic residue. The ATP site is built by Glu458 and Asp473. Asp473 is a binding site for Mn(2+).

It belongs to the FAM20 family. As to quaternary structure, homodimer; disulfide-linked. Interacts with FAM20A; probably forming a heterotetramer of 2 subunits of FAM20A and 2 subunits of FAM20C. Interacts with COPII components SEC23A and SEC24A; transport of FAM20C from the endoplasmic reticulum to the Golgi is likely to be mediated by COPII vesicles. Mn(2+) is required as a cofactor. In terms of processing, N-glycosylation is required for folding. Autophosphorylated. Post-translationally, propeptide cleavage by MBTPS1/S1P promotes FAM20C secretion and maximal kinase activity which is essential for efficient osteoblast differentiation and biomineralization. In the mammary gland, expressed at higher levels in lactating mice than in virgin mice (at protein level). Highly expressed in the tooth. No expression in the dental pulp. At the secretory stage of amelogenesis, it is detected in the matrix of the enamel, in the ameloblasts, and within the cells adjoining the stratum intermedium (a tissue layer analogous to the stellate reticulum seen in the developing molar). Strong expression is observed in maturation stage ameloblasts and throughout the non-cornified layers of the gingival epithelium. Expressed at moderate levels in bone and at low levels in kidney, liver, brain and lung. Very low expression, if any, in spleen and skeletal muscle.

It is found in the golgi apparatus membrane. The protein resides in the secreted. Its subcellular location is the endoplasmic reticulum. It carries out the reaction L-seryl-[protein] + ATP = O-phospho-L-seryl-[protein] + ADP + H(+). It catalyses the reaction L-threonyl-[protein] + ATP = O-phospho-L-threonyl-[protein] + ADP + H(+). With respect to regulation, serine/threonine protein kinase activity is increased upon interaction with FAM20A. In terms of biological role, golgi serine/threonine protein kinase that phosphorylates secretory pathway proteins within Ser-x-Glu/pSer motifs and plays a key role in biomineralization of bones and teeth. Constitutes the main protein kinase for extracellular proteins, generating the majority of the extracellular phosphoproteome. Mainly phosphorylates proteins within the Ser-x-Glu/pSer motif, but also displays a broader substrate specificity. Phosphorylates ERO1A, enhancing its activity which is required to maintain endoplasmic reticulum redox homeostasis and for oxidative protein folding. During endoplasmic reticulum stress, phosphorylates P4HB/PDIA1 which induces a functional switch, causing P4HB to change from an oxidoreductase to a molecular chaperone. This is critical to maintain ER proteostasis and reduce cell death under ER stress. Phosphorylation of P4HB also promotes its interaction with ERN1, leading to reduced activity of ERN1, a key sensor for the endoplasmic reticulum unfolded protein response. Required for osteoblast differentiation and mineralization. Phosphorylates casein as well as a number of proteins involved in biomineralization such as AMELX, AMTN, ENAM and SPP1. In addition to its role in biomineralization, also plays a role in lipid homeostasis, wound healing and cell migration and adhesion. In Mus musculus (Mouse), this protein is Extracellular serine/threonine protein kinase FAM20C.